Here is a 239-residue protein sequence, read N- to C-terminus: Hydroxyacylglutathione hydrolase (239 aa).

Zn(2+) is bound by residues H54, H56, D58, H59, H112, D131, and H169.

This sequence belongs to the metallo-beta-lactamase superfamily. Glyoxalase II family. As to quaternary structure, monomer. Zn(2+) serves as cofactor.

The catalysed reaction is an S-(2-hydroxyacyl)glutathione + H2O = a 2-hydroxy carboxylate + glutathione + H(+). It participates in secondary metabolite metabolism; methylglyoxal degradation; (R)-lactate from methylglyoxal: step 2/2. Its function is as follows. Thiolesterase that catalyzes the hydrolysis of S-D-lactoyl-glutathione to form glutathione and D-lactic acid. This chain is Hydroxyacylglutathione hydrolase, found in Pelagibacter ubique (strain HTCC1062).